Reading from the N-terminus, the 876-residue chain is Leucine--tRNA ligase (876 aa).

The 'HIGH' region signature appears at 42–52; the sequence is PYPSGKLHMGH. The 'KMSKS' region signature appears at 634–638; the sequence is KMSKS. Lys-637 contacts ATP.

This sequence belongs to the class-I aminoacyl-tRNA synthetase family.

It localises to the cytoplasm. The enzyme catalyses tRNA(Leu) + L-leucine + ATP = L-leucyl-tRNA(Leu) + AMP + diphosphate. The protein is Leucine--tRNA ligase of Neisseria meningitidis serogroup C / serotype 2a (strain ATCC 700532 / DSM 15464 / FAM18).